The sequence spans 382 residues: ATP phosphoribosyltransferase regulatory subunit (382 aa).

The protein belongs to the class-II aminoacyl-tRNA synthetase family. HisZ subfamily. Heteromultimer composed of HisG and HisZ subunits.

It is found in the cytoplasm. It functions in the pathway amino-acid biosynthesis; L-histidine biosynthesis; L-histidine from 5-phospho-alpha-D-ribose 1-diphosphate: step 1/9. Required for the first step of histidine biosynthesis. May allow the feedback regulation of ATP phosphoribosyltransferase activity by histidine. The polypeptide is ATP phosphoribosyltransferase regulatory subunit (Acidovorax ebreus (strain TPSY) (Diaphorobacter sp. (strain TPSY))).